The following is a 103-amino-acid chain: Large ribosomal subunit protein uL24 (103 aa).

It belongs to the universal ribosomal protein uL24 family. As to quaternary structure, part of the 50S ribosomal subunit.

Functionally, one of two assembly initiator proteins, it binds directly to the 5'-end of the 23S rRNA, where it nucleates assembly of the 50S subunit. In terms of biological role, one of the proteins that surrounds the polypeptide exit tunnel on the outside of the subunit. In Treponema pallidum (strain Nichols), this protein is Large ribosomal subunit protein uL24.